A 248-amino-acid chain; its full sequence is tRNA (guanine-N(1)-)-methyltransferase (248 aa).

Residues Gly-113 and Ile-133–Leu-138 contribute to the S-adenosyl-L-methionine site.

Belongs to the RNA methyltransferase TrmD family. In terms of assembly, homodimer.

Its subcellular location is the cytoplasm. The catalysed reaction is guanosine(37) in tRNA + S-adenosyl-L-methionine = N(1)-methylguanosine(37) in tRNA + S-adenosyl-L-homocysteine + H(+). Specifically methylates guanosine-37 in various tRNAs. In Shewanella woodyi (strain ATCC 51908 / MS32), this protein is tRNA (guanine-N(1)-)-methyltransferase.